The primary structure comprises 467 residues: MQPFIDDRFLLQNKHAEVLYHDYAKSLPIIDYHCHLSAKEIAEDRRFHDMTELWLEGDHYKWRAMRALGVEEKYITGSASPEEKFQAWAKTVPYCIGNPLYHWTHLELKRYFQVGVLLNEQTWKEVWDHCNELLQQEGYSARSFMIQSNVEWIGTTDDPLDDLMDHQKIAQDSSFSIKVVPSFRPDAVIEINRPSFLDYVSKLGEVADLSVDDYGQLLQALENRVRYFHEAGCRMADHGLESMPYAECTLDEARVIFQKRKEGFALSREEEEKYQTFTLCFLARLYYSLGWVMQLHIGSIRNTNQKMFQQLGPNTGYDSINDFFFAQPLNAFLNRLERDGQLPKTIVYTLNPAYNYIVASTIGNFPSEGVKGKVQFGAAWWFNDHQDGIIRHLNDLANVGVFSTFVGMLTDSRSFLSYVRHEYFRRIVCNLIGSWIEKGEAPQDYAFLGKIVQDICYFNAKQYFDLS.

The protein belongs to the metallo-dependent hydrolases superfamily. Uronate isomerase family.

The enzyme catalyses D-glucuronate = D-fructuronate. The catalysed reaction is aldehydo-D-galacturonate = keto-D-tagaturonate. It functions in the pathway carbohydrate metabolism; pentose and glucuronate interconversion. This is Uronate isomerase from Geobacillus thermodenitrificans (strain NG80-2).